Reading from the N-terminus, the 139-residue chain is Large-conductance mechanosensitive channel (139 aa).

2 helical membrane-spanning segments follow: residues 9–29 and 79–99; these read AFAVKGNVVDMAVGIIIGAAF and IQTVIDFVIVAFAIFMGVKAI.

Belongs to the MscL family. As to quaternary structure, homopentamer.

Its subcellular location is the cell inner membrane. In terms of biological role, channel that opens in response to stretch forces in the membrane lipid bilayer. May participate in the regulation of osmotic pressure changes within the cell. This is Large-conductance mechanosensitive channel from Pseudomonas putida (strain GB-1).